The primary structure comprises 156 residues: Inorganic triphosphatase (156 aa).

In terms of domain architecture, CYTH spans 2 to 148; that stretch reads GKEIEKKFIV…PRYLNSNLVK (147 aa). Residue Tyr29 is the Proton acceptor of the active site.

As to quaternary structure, homodimer.

It carries out the reaction triphosphate + H2O = phosphate + diphosphate. The enzyme catalyses ATP + H2O = ADP + phosphate + H(+). Involved in the hydrolysis of the beta-gamma-phosphoanhydride linkage of triphosphate-containing substrates (inorganic or nucleoside-linked). Catalyzes vigorously the hydrolysis of inorganic triphosphate (PPPi), however it can also catalyze the hydrolysis of ATP to ADP and phosphate. It can use ribonucleotides such as GTP, CTP, or UTP and deoxynucleotides such as dATP, dGTP, dCTP, and dTTP. The protein is Inorganic triphosphatase of Acetivibrio thermocellus (strain ATCC 27405 / DSM 1237 / JCM 9322 / NBRC 103400 / NCIMB 10682 / NRRL B-4536 / VPI 7372) (Clostridium thermocellum).